A 168-amino-acid chain; its full sequence is Crossover junction endodeoxyribonuclease RuvC (168 aa).

Active-site residues include aspartate 10, glutamate 70, and aspartate 143. Mg(2+) contacts are provided by aspartate 10, glutamate 70, and aspartate 143.

This sequence belongs to the RuvC family. Homodimer which binds Holliday junction (HJ) DNA. The HJ becomes 2-fold symmetrical on binding to RuvC with unstacked arms; it has a different conformation from HJ DNA in complex with RuvA. In the full resolvosome a probable DNA-RuvA(4)-RuvB(12)-RuvC(2) complex forms which resolves the HJ. The cofactor is Mg(2+).

It localises to the cytoplasm. It catalyses the reaction Endonucleolytic cleavage at a junction such as a reciprocal single-stranded crossover between two homologous DNA duplexes (Holliday junction).. The RuvA-RuvB-RuvC complex processes Holliday junction (HJ) DNA during genetic recombination and DNA repair. Endonuclease that resolves HJ intermediates. Cleaves cruciform DNA by making single-stranded nicks across the HJ at symmetrical positions within the homologous arms, yielding a 5'-phosphate and a 3'-hydroxyl group; requires a central core of homology in the junction. The consensus cleavage sequence is 5'-(A/T)TT(C/G)-3'. Cleavage occurs on the 3'-side of the TT dinucleotide at the point of strand exchange. HJ branch migration catalyzed by RuvA-RuvB allows RuvC to scan DNA until it finds its consensus sequence, where it cleaves and resolves the cruciform DNA. This is Crossover junction endodeoxyribonuclease RuvC from Roseiflexus sp. (strain RS-1).